Here is an 864-residue protein sequence, read N- to C-terminus: Alanine--tRNA ligase (864 aa).

Zn(2+) contacts are provided by His-534, His-538, Cys-639, and His-643.

The protein belongs to the class-II aminoacyl-tRNA synthetase family. Requires Zn(2+) as cofactor.

Its subcellular location is the cytoplasm. The enzyme catalyses tRNA(Ala) + L-alanine + ATP = L-alanyl-tRNA(Ala) + AMP + diphosphate. Catalyzes the attachment of alanine to tRNA(Ala) in a two-step reaction: alanine is first activated by ATP to form Ala-AMP and then transferred to the acceptor end of tRNA(Ala). Also edits incorrectly charged Ser-tRNA(Ala) and Gly-tRNA(Ala) via its editing domain. This Onion yellows phytoplasma (strain OY-M) protein is Alanine--tRNA ligase.